Consider the following 387-residue polypeptide: Eukaryotic translation initiation factor 3 subunit M (387 aa).

The 160-residue stretch at 181–340 (LSSKVMIELL…HKVHITSTMH (160 aa)) folds into the PCI domain.

The protein belongs to the eIF-3 subunit M family. As to quaternary structure, component of the eukaryotic translation initiation factor 3 (eIF-3) complex. The eIF-3 complex interacts with pix.

The protein resides in the cytoplasm. Its subcellular location is the golgi apparatus. In terms of biological role, component of the eukaryotic translation initiation factor 3 (eIF-3) complex, which is involved in protein synthesis of a specialized repertoire of mRNAs and, together with other initiation factors, stimulates binding of mRNA and methionyl-tRNAi to the 40S ribosome. The eIF-3 complex specifically targets and initiates translation of a subset of mRNAs involved in cell proliferation. This chain is Eukaryotic translation initiation factor 3 subunit M, found in Drosophila erecta (Fruit fly).